Reading from the N-terminus, the 143-residue chain is D-aminoacyl-tRNA deacylase (143 aa).

The Gly-cisPro motif, important for rejection of L-amino acids signature appears at 135–136; that stretch reads GP.

Belongs to the DTD family. Homodimer.

The protein localises to the cytoplasm. The catalysed reaction is glycyl-tRNA(Ala) + H2O = tRNA(Ala) + glycine + H(+). It catalyses the reaction a D-aminoacyl-tRNA + H2O = a tRNA + a D-alpha-amino acid + H(+). In terms of biological role, an aminoacyl-tRNA editing enzyme that deacylates mischarged D-aminoacyl-tRNAs. Also deacylates mischarged glycyl-tRNA(Ala), protecting cells against glycine mischarging by AlaRS. Acts via tRNA-based rather than protein-based catalysis; rejects L-amino acids rather than detecting D-amino acids in the active site. By recycling D-aminoacyl-tRNA to D-amino acids and free tRNA molecules, this enzyme counteracts the toxicity associated with the formation of D-aminoacyl-tRNA entities in vivo and helps enforce protein L-homochirality. This is D-aminoacyl-tRNA deacylase from Nocardia farcinica (strain IFM 10152).